The primary structure comprises 208 residues: Small ribosomal subunit protein uS4 (208 aa).

The S4 RNA-binding domain occupies 97-158; that stretch reads TRLDNVIYRM…RAQKYLCVQE (62 aa).

It belongs to the universal ribosomal protein uS4 family. In terms of assembly, part of the 30S ribosomal subunit. Contacts protein S5. The interaction surface between S4 and S5 is involved in control of translational fidelity.

One of the primary rRNA binding proteins, it binds directly to 16S rRNA where it nucleates assembly of the body of the 30S subunit. Functionally, with S5 and S12 plays an important role in translational accuracy. The polypeptide is Small ribosomal subunit protein uS4 (Xylella fastidiosa (strain M23)).